The chain runs to 480 residues: MKIVHVASELFPYVKTGGLADAVASLAGMLADSGHEVAVFLPGYRAALEHRDAAAAERRYRLKVEMGQQYLSGDVRVFSPRPNLSIFLICREEFFDRRAPYGNGERDYEDNSDRFIFFCKGVVETLRLADMQADVVHAHDWQAALLPLLLREAERRQGGMLAMKTIFTIHNIAFQGIFPRAVFARTNLPDELNSVDGLEYYEQINFMKAGILFADRVTTVSPRYAEEIQTPEFGCGLDGVVQTRESDLVGLLNGVDTKVWNPATDPLLPARYSRADLAGKRVCRAELLKRFGFAPDFDGPVFGMVCRLAEQKGVDLVLANQGFFLSQSCRLIVLGAGELRYETAMKALAARAPNKIALSAKLDEAMSHLIEAGSDFFLMPSLFEPCGLNQMYSQIYGTLPIVSRVGGLVDTVIDADQQPEKGTGLMCEPTSASLLDVLARAMTLFDDKPRYGTVQQRAMAREFGWNVAAAGYERLYRDTL.

Lys15 contributes to the ADP-alpha-D-glucose binding site.

This sequence belongs to the glycosyltransferase 1 family. Bacterial/plant glycogen synthase subfamily.

It carries out the reaction [(1-&gt;4)-alpha-D-glucosyl](n) + ADP-alpha-D-glucose = [(1-&gt;4)-alpha-D-glucosyl](n+1) + ADP + H(+). It participates in glycan biosynthesis; glycogen biosynthesis. Synthesizes alpha-1,4-glucan chains using ADP-glucose. The sequence is that of Glycogen synthase from Opitutus terrae (strain DSM 11246 / JCM 15787 / PB90-1).